Consider the following 419-residue polypeptide: AT-rich binding protein (419 aa).

The C2H2-type 1 zinc finger occupies 29–52 (IVCHTCQEELQTQDAFWKHIQDEH). Residues 121–179 (LHEAQHQQQQQQQQHQQQQQQQQHQQQQQHQHHQHQQQQQHLHQQQQQQQQQQRDAAKE) form a disordered region. Low complexity-rich tracts occupy residues 126–149 (HQQQ…QQQQ) and 156–173 (QQQQ…QQQQ). C2H2-type zinc fingers lie at residues 352 to 376 (YVCD…RVVH) and 382 to 405 (FNCD…KKKH).

The protein resides in the nucleus. Its function is as follows. May be a transcription factor for genes having (A+T) stretches in their promoter and/or enhancer regions. Binds to AT rich DNA. The protein is AT-rich binding protein of Drosophila grimshawi (Hawaiian fruit fly).